Consider the following 256-residue polypeptide: Pimeloyl-[acyl-carrier protein] methyl ester esterase (256 aa).

An AB hydrolase-1 domain is found at 15-242 (HLVLLHGWGL…AAHAPFISHP (228 aa)). Substrate is bound by residues tryptophan 22, 82 to 83 (SL), and 143 to 147 (FLALQ). Serine 82 (nucleophile) is an active-site residue. Active-site residues include aspartate 207 and histidine 235. Residue histidine 235 participates in substrate binding.

This sequence belongs to the AB hydrolase superfamily. Carboxylesterase BioH family. As to quaternary structure, monomer.

The protein resides in the cytoplasm. It carries out the reaction 6-carboxyhexanoyl-[ACP] methyl ester + H2O = 6-carboxyhexanoyl-[ACP] + methanol + H(+). Its pathway is cofactor biosynthesis; biotin biosynthesis. The physiological role of BioH is to remove the methyl group introduced by BioC when the pimeloyl moiety is complete. It allows to synthesize pimeloyl-ACP via the fatty acid synthetic pathway through the hydrolysis of the ester bonds of pimeloyl-ACP esters. The polypeptide is Pimeloyl-[acyl-carrier protein] methyl ester esterase (Citrobacter koseri (strain ATCC BAA-895 / CDC 4225-83 / SGSC4696)).